A 156-amino-acid polypeptide reads, in one-letter code: Small ribosomal subunit protein uS7 (156 aa).

This sequence belongs to the universal ribosomal protein uS7 family. In terms of assembly, part of the 30S ribosomal subunit. Contacts proteins S9 and S11.

One of the primary rRNA binding proteins, it binds directly to 16S rRNA where it nucleates assembly of the head domain of the 30S subunit. Is located at the subunit interface close to the decoding center, probably blocks exit of the E-site tRNA. This Kineococcus radiotolerans (strain ATCC BAA-149 / DSM 14245 / SRS30216) protein is Small ribosomal subunit protein uS7.